The sequence spans 235 residues: Putative uridine kinase C227.14 (235 aa).

36–43 (GGPGSGKS) contacts ATP.

This sequence belongs to the uridine kinase family.

It is found in the cytoplasm. Its subcellular location is the nucleus. It carries out the reaction uridine + ATP = UMP + ADP + H(+). The enzyme catalyses cytidine + ATP = CMP + ADP + H(+). The protein operates within pyrimidine metabolism; CTP biosynthesis via salvage pathway; CTP from cytidine: step 1/3. It participates in pyrimidine metabolism; UMP biosynthesis via salvage pathway; UMP from uridine: step 1/1. This chain is Putative uridine kinase C227.14, found in Schizosaccharomyces pombe (strain 972 / ATCC 24843) (Fission yeast).